The following is a 601-amino-acid chain: Putative helicase 7 (601 aa).

The 166-residue stretch at 17–182 (QSFLMSDKNL…IIDAEIIKTD (166 aa)) folds into the Helicase ATP-binding domain. 30 to 37 (APTGTGKS) contributes to the ATP binding site. The DEAH box motif lies at 129–132 (DEIH). A Helicase C-terminal domain is found at 208 to 375 (LKEDFIKKMV…VLEDFLLALI (168 aa)).

The polypeptide is Putative helicase 7 (SIFV0007) (Saccharolobus islandicus (Sulfolobus islandicus)).